Reading from the N-terminus, the 401-residue chain is MRFSRKLLGPFVGSLAKKLDYYSQFQPSSLTIQQYLDFGRIGTSANSYTFLKNELLVRLANIMQEFTLLPPKLLQMPSSKMVSNWYAESFEDLLLFEASDSSPEQVARFNDQLTVVLKRHAHVVETMAEGLIELRESDGVDIASEKGIQYFLDRFYINRISIRMLQNQHLVVFGNVLPESPRHVGCIDPACDVESVVYDAFENARFLCDRYYLTSPSMKLEMHNAVEKGKPISIVAVPSHLYHMMFELFKNAMRATVEYHGVDDDLPDIKVYVVKGQEDLSIKICDRGGGVSRTILERLYNYMYSTAPPPPRDGTQAPLAGYGYGLPLSRLYARYFLGDLFLVSMEGHGTDACIYLKAVPVEASEVLPIYSTSSRRNLTMGPQVADWSHHVPGQGNRPAQS.

A Histidine kinase domain is found at 131 to 360 (LIELRESDGV…DACIYLKAVP (230 aa)). Residues 247-254 (ELFKNAMR), aspartate 286, 305-306 (ST), and 321-326 (GYGYGL) each bind ATP.

This sequence belongs to the PDK/BCKDK protein kinase family.

It is found in the mitochondrion matrix. It catalyses the reaction L-seryl-[pyruvate dehydrogenase E1 alpha subunit] + ATP = O-phospho-L-seryl-[pyruvate dehydrogenase E1 alpha subunit] + ADP + H(+). Functionally, inhibits the mitochondrial pyruvate dehydrogenase complex by phosphorylation of the E1 alpha subunit, thus contributing to the regulation of glucose metabolism. Required for normal lifespan. The polypeptide is Probable [pyruvate dehydrogenase (acetyl-transferring)] kinase, mitochondrial (pdhk-2) (Caenorhabditis elegans).